The sequence spans 1118 residues: Cytospin-A (1118 aa).

The interval 1-176 (MKKASRSVGS…SKSKSDNQIS (176 aa)) is disordered. The span at 29–52 (ESGSSLSAVTKLSKPGTSASLLKT) shows a compositional bias: polar residues. Residues 79–119 (STCASTVSSTTGTTMSTLENKPRTVAGSTARRSTSSGTKES) show a composition bias toward low complexity. Composition is skewed to basic and acidic residues over residues 120-131 (SSSRERIRDRSR) and 158-171 (TNPE…KSKS). The stretch at 193–281 (KTKDVEILHL…LNALGFSLEQ (89 aa)) forms a coiled coil. 2 disordered regions span residues 299-324 (ITAG…GSME) and 359-391 (SSDD…NASE). Positions 359 to 373 (SSDDALDAPSSSESE) are enriched in low complexity. Coiled coils occupy residues 396–450 (CLTE…MESL) and 488–808 (RYME…RGRV). 2 disordered regions span residues 856–879 (PSPA…PPAA) and 921–1002 (TSST…RKDP). Over residues 937–946 (ESAKSISVSR) the composition is skewed to low complexity. The segment covering 947-957 (RSSEEIKRDIS) has biased composition (basic and acidic residues). Residues 972–991 (TTSPQLSLSSSPTASVTPTT) show a composition bias toward low complexity. A Calponin-homology (CH) domain is found at 1012–1117 (GSKRNALLKW…YVTAIYKYFE (106 aa)).

It belongs to the cytospin-A family. May interact with both microtubules and actin cytoskeleton.

It is found in the cytoplasm. The protein resides in the cytoskeleton. It localises to the spindle. Its subcellular location is the cell junction. The protein localises to the gap junction. Its function is as follows. Involved in cytokinesis and spindle organization. May play a role in actin cytoskeleton organization and microtubule stabilization and hence required for proper cell adhesion and migration. This chain is Cytospin-A (SPECC1L), found in Gallus gallus (Chicken).